The following is a 329-amino-acid chain: Deoxynucleotidyltransferase terminal-interacting protein 1 (329 aa).

Disordered regions lie at residues 1 to 22 (MGAT…GGLE) and 147 to 178 (KRGR…ILSS). An important for dimerization region spans residues 56-147 (MTTSFTDPAI…RLTHELPGIK (92 aa)). A compositionally biased stretch (basic and acidic residues) spans 147 to 158 (KRGRQAEEECAH). A DNA-binding region (a.T hook) is located at residues 159–173 (RGSPLPKKRKGRPPG). Residue Ser-161 is modified to Phosphoserine. The short motif at 164 to 170 (PKKRKGR) is the Nuclear localization signal element. Positions 197–316 (REGPKWDPAR…MRKYMETLRT (120 aa)) are important for DNA and nucleosome binding. Positions 216–237 (GSRANKALGMGGTRGRIYIKHP) form a DNA-binding region, H-T-H motif.

Monomer and homodimer. A minor proportion may form homotrimers. Interacts with ZNF541. Interacts with the terminal deoxynucleotidyltransferase DNTT. Interacts with TRERF1. Identified in a histone deacetylase complex that contains DNTTIP1, HDAC1 and MIDEAS; this complex assembles into a tetramer that contains four copies of each protein chain. Component of a histone deacetylase complex containing DNTTIP1, ZNF541, HDAC1 and HDAC2. Identified in a complex with KCTD19, HDAC1, HDAC2 and ZNF541.

It localises to the nucleus. Its function is as follows. Increases DNTT terminal deoxynucleotidyltransferase activity (in vitro). Also acts as a transcriptional regulator, binding to the consensus sequence 5'-GNTGCATG-3' following an AT-tract. Associates with RAB20 promoter and positively regulates its transcription. Binds DNA and nucleosomes; may recruit HDAC1 complexes to nucleosomes or naked DNA. The protein is Deoxynucleotidyltransferase terminal-interacting protein 1 (DNTTIP1) of Homo sapiens (Human).